A 215-amino-acid polypeptide reads, in one-letter code: Ras-related protein RAB1BV (215 aa).

GTP-binding positions include 22-29 (GDSGVGKS), 70-74 (DTAGQ), and 128-131 (NKAD). The tract at residues 183–215 (DSDTRQEAQPSITIKPADQSGNQAAAKSACCGS) is disordered. S-geranylgeranyl cysteine attachment occurs at residues Cys-212 and Cys-213.

The protein belongs to the small GTPase superfamily. Rab family.

The protein resides in the cell membrane. The protein is Ras-related protein RAB1BV (RAB1BV) of Beta vulgaris (Sugar beet).